The chain runs to 199 residues: Crossover junction endodeoxyribonuclease RuvC (199 aa).

Catalysis depends on residues D7, E68, and D141. Residues D7, E68, and D141 each coordinate Mg(2+).

Belongs to the RuvC family. As to quaternary structure, homodimer which binds Holliday junction (HJ) DNA. The HJ becomes 2-fold symmetrical on binding to RuvC with unstacked arms; it has a different conformation from HJ DNA in complex with RuvA. In the full resolvosome a probable DNA-RuvA(4)-RuvB(12)-RuvC(2) complex forms which resolves the HJ. Requires Mg(2+) as cofactor.

The protein resides in the cytoplasm. The enzyme catalyses Endonucleolytic cleavage at a junction such as a reciprocal single-stranded crossover between two homologous DNA duplexes (Holliday junction).. Functionally, the RuvA-RuvB-RuvC complex processes Holliday junction (HJ) DNA during genetic recombination and DNA repair. Endonuclease that resolves HJ intermediates. Cleaves cruciform DNA by making single-stranded nicks across the HJ at symmetrical positions within the homologous arms, yielding a 5'-phosphate and a 3'-hydroxyl group; requires a central core of homology in the junction. The consensus cleavage sequence is 5'-(A/T)TT(C/G)-3'. Cleavage occurs on the 3'-side of the TT dinucleotide at the point of strand exchange. HJ branch migration catalyzed by RuvA-RuvB allows RuvC to scan DNA until it finds its consensus sequence, where it cleaves and resolves the cruciform DNA. This Saccharopolyspora erythraea (strain ATCC 11635 / DSM 40517 / JCM 4748 / NBRC 13426 / NCIMB 8594 / NRRL 2338) protein is Crossover junction endodeoxyribonuclease RuvC.